We begin with the raw amino-acid sequence, 382 residues long: ATP phosphoribosyltransferase regulatory subunit (382 aa).

This sequence belongs to the class-II aminoacyl-tRNA synthetase family. HisZ subfamily. As to quaternary structure, heteromultimer composed of HisG and HisZ subunits.

Its subcellular location is the cytoplasm. It participates in amino-acid biosynthesis; L-histidine biosynthesis; L-histidine from 5-phospho-alpha-D-ribose 1-diphosphate: step 1/9. Its function is as follows. Required for the first step of histidine biosynthesis. May allow the feedback regulation of ATP phosphoribosyltransferase activity by histidine. The chain is ATP phosphoribosyltransferase regulatory subunit from Burkholderia pseudomallei (strain 668).